Here is a 105-residue protein sequence, read N- to C-terminus: Large ribosomal subunit protein uL24 (105 aa).

The span at 77–93 shows a compositional bias: basic and acidic residues; the sequence is DGKPTRVGYRKDDETGK. Residues 77–105 are disordered; that stretch reads DGKPTRVGYRKDDETGKNVRIAKSNGKDL.

It belongs to the universal ribosomal protein uL24 family. As to quaternary structure, part of the 50S ribosomal subunit.

Its function is as follows. One of two assembly initiator proteins, it binds directly to the 5'-end of the 23S rRNA, where it nucleates assembly of the 50S subunit. In terms of biological role, one of the proteins that surrounds the polypeptide exit tunnel on the outside of the subunit. The protein is Large ribosomal subunit protein uL24 of Mycolicibacterium gilvum (strain PYR-GCK) (Mycobacterium gilvum (strain PYR-GCK)).